Reading from the N-terminus, the 231-residue chain is 5'-methylthioadenosine/S-adenosylhomocysteine nucleosidase (231 aa).

E12 (proton acceptor) is an active-site residue. Substrate is bound by residues G78, V153, and 174–175 (ME). Residue D198 is the Proton donor of the active site.

The protein belongs to the PNP/UDP phosphorylase family. MtnN subfamily.

It carries out the reaction S-adenosyl-L-homocysteine + H2O = S-(5-deoxy-D-ribos-5-yl)-L-homocysteine + adenine. It catalyses the reaction S-methyl-5'-thioadenosine + H2O = 5-(methylsulfanyl)-D-ribose + adenine. The enzyme catalyses 5'-deoxyadenosine + H2O = 5-deoxy-D-ribose + adenine. It participates in amino-acid biosynthesis; L-methionine biosynthesis via salvage pathway; S-methyl-5-thio-alpha-D-ribose 1-phosphate from S-methyl-5'-thioadenosine (hydrolase route): step 1/2. Its function is as follows. Catalyzes the irreversible cleavage of the glycosidic bond in both 5'-methylthioadenosine (MTA) and S-adenosylhomocysteine (SAH/AdoHcy) to adenine and the corresponding thioribose, 5'-methylthioribose and S-ribosylhomocysteine, respectively. Also cleaves 5'-deoxyadenosine, a toxic by-product of radical S-adenosylmethionine (SAM) enzymes, into 5-deoxyribose and adenine. In Vibrio campbellii (strain ATCC BAA-1116), this protein is 5'-methylthioadenosine/S-adenosylhomocysteine nucleosidase.